We begin with the raw amino-acid sequence, 5538 residues long: Leashin (5538 aa).

Residues 1–10 are compositionally biased toward gly residues; it reads MFRALMGGGR. Disordered regions lie at residues 1–270, 286–315, 331–365, 510–555, 596–712, 800–901, 913–944, 1027–1145, 1164–1297, 1310–1398, 1432–1993, 2067–2146, 2165–2207, 2233–3065, 3077–3894, 3910–4034, 4072–4128, 4238–4421, 4442–4463, 4509–4698, 4733–4850, and 4910–5052; these read MFRA…SSMG, EVDP…TFGI, LPLP…PHTH, SRDA…KKSS, TESV…DISQ, AATS…FPTG, ALAS…PVPT, NRPH…KDSF, VLSG…GYRD, PTPP…RYVS, EDPT…TSVE, SELL…VNAF, NRLS…SPPA, PEAA…SQPI, MAEE…EIVS, EEKA…DTGL, KFKQ…EEPL, EAAL…SNQA, PRPL…DEND, LRRQ…TSNT, KTDG…VEQA, and ALTV…RHRR. The tract at residues 1–1100 is woronin bodies-binding region; that stretch reads MFRALMGGGR…RASGVQLIDR (1100 aa). A compositionally biased stretch (low complexity) spans 14-23; sequence SRSTTSSSKS. Composition is skewed to basic and acidic residues over residues 42 to 51 and 89 to 167; these read SRGDDRDRGL and VEHD…ERSR. Residues 299–313 show a composition bias toward polar residues; sequence AGTTSEPPKPSNTTF. Over residues 334 to 352 the composition is skewed to pro residues; the sequence is PASPTSPPEPVPTTAPYAP. Residues 514 to 523 show a composition bias toward basic residues; it reads PRKHHYRQRR. The segment covering 598–607 has biased composition (polar residues); it reads SVSTARRSQT. Residues 639 to 655 show a composition bias toward basic residues; the sequence is HRSRSRSHSSSRNRRHS. A compositionally biased stretch (low complexity) spans 660–674; that stretch reads AAVGAAVGSGAIALA. The span at 682-698 shows a compositional bias: basic residues; that stretch reads SRSRSRSRFPRKSKGRK. Residues 809-825 are compositionally biased toward basic and acidic residues; that stretch reads RAGEILVAKETRSRHSD. Low complexity-rich tracts occupy residues 842-851 and 862-880; these read GDQSSSSVSS and GSDE…GWRW. Basic residues predominate over residues 881-891; it reads GSKKNKKKKRA. Composition is skewed to basic and acidic residues over residues 1068–1091, 1098–1145, 1178–1198, 1207–1226, 1356–1365, 1375–1387, 1447–1462, and 1478–1488; these read LTKE…DAER, IDRD…KDSF, SQRR…RGSE, SKSE…RQPE, WGEHKTHEYE, SVDH…REQP, GRVE…ESKS, and EEKAPSSRVIE. The segment covering 1506–1516 has biased composition (low complexity); sequence QESSEPQTRTS. 3 stretches are compositionally biased toward basic and acidic residues: residues 1521–1536, 1549–1559, and 1572–1594; these read VIDR…DGSR, GKERDESELRA, and EELR…DRRS. Residues 1639-1648 show a composition bias toward basic residues; sequence KKKRRKRRSK. Basic and acidic residues-rich tracts occupy residues 1672 to 1686, 1700 to 1773, and 1788 to 1800; these read EKLK…EKKA, EPVD…QRRE, and KSGE…KLSE. Composition is skewed to low complexity over residues 1867-1876 and 1889-1898; these read PAPRSRSRPA and SQSSRRSSIL. Basic and acidic residues predominate over residues 1950-1975; that stretch reads KNSREMRPLWLVERHGPGHGEHKLEE. 2 stretches are compositionally biased toward polar residues: residues 1984–1993 and 2121–2130; these read KTSSANTSVE and TPQNNVTAAS. Basic and acidic residues-rich tracts occupy residues 2187-2196, 2269-2279, and 2307-2320; these read DADRTHKPIA, VPRDDKRRDSV, and GENK…KNEN. Over residues 2321–2331 the composition is skewed to polar residues; sequence ANDNSQAQTEQ. Over residues 2344 to 2355 the composition is skewed to basic residues; it reads AKKKKKKNKKKR. The segment covering 2358–2370 has biased composition (polar residues); sequence MDSNTQEPTTPVD. The segment covering 2427–2441 has biased composition (basic and acidic residues); the sequence is DVEKAIEAPDVRKEL. Positions 2449 to 2461 are enriched in low complexity; the sequence is APEDTPAEPTAET. A compositionally biased stretch (basic residues) spans 2473–2484; sequence KKSKKKKKKKNK. Residues 2494–2525 show a composition bias toward polar residues; it reads DPASTETPEASAANSQVVAAEQVESTLETTQP. Composition is skewed to basic and acidic residues over residues 2580–2590, 2647–2661, and 2677–2691; these read NQAKELPHPEE, PEDK…DLKS, and ALDK…RPAE. Over residues 2719 to 2734 the composition is skewed to low complexity; it reads EEPTPTAAELETPLSR. Basic residues predominate over residues 2735 to 2747; sequence KNSKKNKKKNKRK. Over residues 2796–2812 the composition is skewed to basic and acidic residues; it reads DENKGESRDVQAVKEET. Residues 2874–2884 are compositionally biased toward basic residues; that stretch reads KKKAKKKKNRK. Positions 2885-2894 are enriched in polar residues; that stretch reads TANVSESQPE. 2 stretches are compositionally biased toward basic residues: residues 3003 to 3013 and 3089 to 3100; these read KKSKKNKKKKQ and KKTKKEKKKKRQ. A compositionally biased stretch (basic and acidic residues) spans 3145–3172; it reads AIEHAEAAAEHSQEQPNKDVTLHADHSP. Residues 3248–3268 are compositionally biased toward low complexity; the sequence is PAMEGGAAAEELVAVEPDVLE. Polar residues predominate over residues 3293 to 3303; the sequence is ELVNAETTQKT. Residues 3329-3341 show a composition bias toward basic residues; it reads SKKKDKKKKKKRQ. Residues 3347 to 3367 are compositionally biased toward basic and acidic residues; it reads DEQRSSTKEEPTAEFSSDHVP. Composition is skewed to low complexity over residues 3397-3409 and 3422-3435; these read TQTA…SSAS and ESTQ…AQTA. Residues 3436-3450 show a composition bias toward basic residues; that stretch reads KSKKKAKKDKKKRKS. Over residues 3480–3495 the composition is skewed to basic and acidic residues; the sequence is EGPKPGDKPTSPKDSS. The span at 3547–3564 shows a compositional bias: low complexity; sequence EEQAVVEETVAPPVVDEA. Polar residues-rich tracts occupy residues 3565–3580 and 3604–3613; these read SQLQ…LWSE and VSPSLENNEG. Basic residues-rich tracts occupy residues 3642 to 3652 and 3716 to 3730; these read KSKKNKKKKKR and KAKK…KRQS. The span at 3768–3787 shows a compositional bias: polar residues; it reads TFSQETSETISTEAKSSEPS. Residues 3800-3819 are compositionally biased toward basic and acidic residues; it reads KENQSHDTEPHGGNDKDLTW. Residues 3823 to 3837 show a composition bias toward polar residues; sequence MVSSQVEQQQGTPSD. The span at 3876–3893 shows a compositional bias: basic and acidic residues; it reads DRLERSGEEGTRVKKEIV. 2 stretches are compositionally biased toward polar residues: residues 3915–3925 and 3965–3980; these read ISSQGEDTIQV and KDQF…SQSK. The span at 4010-4020 shows a compositional bias: acidic residues; sequence TSQDDSVDAVQ. Residues 4111–4123 are compositionally biased toward basic and acidic residues; it reads ESRENKFKEKQLA. A compositionally biased stretch (basic residues) spans 4244–4255; that stretch reads KNSKKKSKKAKK. A compositionally biased stretch (polar residues) spans 4328–4345; it reads LGQTPNMDNQTDDVQSTE. The segment covering 4378–4391 has biased composition (basic residues); sequence KLSKKDRRKAKKKS. A compositionally biased stretch (basic and acidic residues) spans 4392 to 4406; that stretch reads AKDAIEPSDEPELRN. A septal pore-binding region region spans residues 4495-5538; it reads AIAEFDETAI…SSTMDISNVI (1044 aa). The span at 4554 to 4570 shows a compositional bias: polar residues; sequence TEQSAGLQAKSVSSQGA. Basic and acidic residues-rich tracts occupy residues 4574 to 4591 and 4660 to 4673; these read IQDD…DQTK and EESH…EKGP. Positions 4940-4954 are enriched in low complexity; it reads SSVSSVKSVQSTHSV. The segment covering 4966 to 4988 has biased composition (polar residues); it reads RNTSGDLRAASQAQESHGTQPHA. Residues 4989–4998 show a composition bias toward pro residues; the sequence is TPQPPQPPPS. Residues 5050 to 5223 adopt a coiled-coil conformation; it reads HRRSMQHLQE…QQQIAASLHD (174 aa).

As to quaternary structure, binds directly or indirectly to the Woronin body major protein hexA.

The protein resides in the cell septum. Its function is as follows. Acts as the tether and is essential for anchoring of Woronin bodies at the septal pore. In damaged hyphae, Woronin bodies occlude septal pores in order to separate intact from damaged compartments. In Aspergillus fumigatus (strain ATCC MYA-4609 / CBS 101355 / FGSC A1100 / Af293) (Neosartorya fumigata), this protein is Leashin.